The following is a 252-amino-acid chain: MGRGKIEIKKIENQTARQVTFSKRRTGLIKKTRELSILCDAHIGLIVFSATGKLSEFCSEQNRMPQLIDRYLHTNGLRLPDHHDDQEQLHHEMELLRRETCNLELRLRPFHGHDLASIPPNELDGLERQLEHSVLKVRERKNELMQQQLENLSRKRRMLEEDNNNMYRWLHEHRAAMEFQQAGIDTKPGEYQQFIEQLQCYKPGEYQQFLEQQQQQPNSVLQLATLPSEIDPTYNLQLAQPNLQNDPTAQND.

The region spanning 1–61 (MGRGKIEIKK…GKLSEFCSEQ (61 aa)) is the MADS-box domain. One can recognise a K-box domain in the interval 86–176 (QEQLHHEMEL…YRWLHEHRAA (91 aa)). Positions 121–174 (NELDGLERQLEHSVLKVRERKNELMQQQLENLSRKRRMLEEDNNNMYRWLHEHR) form a coiled coil.

Interacts with AP1/AGL7, SEP1/AGL2, SEP2/AGL4, SEP3/AGL9 and AGL3/SEP4. In terms of tissue distribution, expressed in buds, flowers and immature seeds, but not in roots, stems, leaves, seedlings or siliques valves. Expression in seed coat is confined to the endothelium layer.

It localises to the nucleus. Its function is as follows. Transcription factor involved in the developmental regulation of the endothelium and in the accumulation of proanthocyanidins (PAs) or condensed tannins which give the seed its brown pigmentation after oxidation. Necessary for the normal activation of the BANYULS promoter in the endothelium body. Is required, together with AGL11/STK for the maternal control of endothelium formation, which is essential for female gametophyte development and fertilization, and seed formation. Interacts genetically with AGL1/SHP1 and AGL5/SHP2 in a partially antagonistic manner and represses AGL1/SHP1, AGL5/SHP2, and AGL8/FUL during flower development. Is essential for the coordination of cell divisions in ovule, seed coat development and endosperm formation. Mediates the crosstalk between endothelium and nucellus to ensure proper seed formation. Functions redundantly with AGL63/GOA to repress nucellus growth and promote its degeneration. Represses the negative regulator of autophagy and programmed cell death HVA22D in the proximal nucellus. Binds specifically to the CArG box DNA sequence 5'-CC (A/T)6 GG-3'. The protein is Protein TRANSPARENT TESTA 16 (TT16) of Arabidopsis thaliana (Mouse-ear cress).